Consider the following 320-residue polypeptide: Glutaconate CoA-transferase subunit A (320 aa).

This sequence belongs to the 3-oxoacid CoA-transferase subunit A family. As to quaternary structure, heterooctamer of four A and four B subunits.

It localises to the cytoplasm. The catalysed reaction is trans-glutaconate + acetyl-CoA = (2E)-glutaconyl-CoA + acetate. The protein operates within amino-acid degradation; L-glutamate degradation via hydroxyglutarate pathway; crotonoyl-CoA from L-glutamate: step 3/5. In terms of biological role, catalyzes the transfer of the CoA moiety from acetyl-CoA to (R)-2-hydroxyglutarate and related compounds like glutaconate. The protein is Glutaconate CoA-transferase subunit A (gctA) of Acidaminococcus fermentans (strain ATCC 25085 / DSM 20731 / CCUG 9996 / CIP 106432 / VR4).